We begin with the raw amino-acid sequence, 367 residues long: Phosphoribosylaminoimidazole-succinocarboxamide synthase (367 aa).

The protein belongs to the SAICAR synthetase family.

The catalysed reaction is 5-amino-1-(5-phospho-D-ribosyl)imidazole-4-carboxylate + L-aspartate + ATP = (2S)-2-[5-amino-1-(5-phospho-beta-D-ribosyl)imidazole-4-carboxamido]succinate + ADP + phosphate + 2 H(+). Its pathway is purine metabolism; IMP biosynthesis via de novo pathway; 5-amino-1-(5-phospho-D-ribosyl)imidazole-4-carboxamide from 5-amino-1-(5-phospho-D-ribosyl)imidazole-4-carboxylate: step 1/2. The protein is Phosphoribosylaminoimidazole-succinocarboxamide synthase of Shewanella putrefaciens (strain CN-32 / ATCC BAA-453).